The following is a 971-amino-acid chain: MLRVGRAVACVACNNLASKNMGVRFRMPLQKLHPLSRAIHHRYNASANAQRPPHCSAARHFTSMSRLPMRPPKPSPGGHGGWRYQQHRSFWMLRLASRLLKLRYIVLGSAVGGGYTAKKTYEEWKDMLPDMSAYNWVIPDFVWELSDQIDLDKLTKILPELEEIAKLLPELPDFDKIGENFTFLKSILFTAEAPGDTPVKAATEAPVTATPEASDKQFKKSSDKEKVDQLQEELLRTQMKYQRMLERLEKENKDLRKVVLQKDEKGIHQRKIKKSLIDMYSEVLDILSDFDSNYNTQDHLPRVVVVGDQSAGKTSVLEMIAQARIFPRGSGEMMTRSPVKVTLSEGPHHVAMFKDSSREFDLGKEEDLAALRHEIELRMRKSVKEGQTVSPETISLSVKGPGIQRMVLVDLPGVISTVTAGMAADTKETIFSISKNYMQNPNAIILCIQDGSVDAEADRHRPGQSNGPAGERTIFVLTKVDLAEKNLASPNRIQQIVEGKLFPMKALGYFAVVTGKGSAGESIDSIKDYEEDFFQNSRLLRDGMLKAHQVTTKNLSLAVSDCFWKMVRESVEQQADAFKASRFNLETEWKNNYPRLRELDRNELFEKAKNEILDEVISLSQVTPKHWEAILQKKLWERVSTHVIENIYLPAAQTMNSGTFNTTVDIKLKQWTDKQLPHKALEVAWETLQEEFARFMAEYKGKDQDDIFDKLKEAVKDESIKRHKWNERAMDSLRVIQHNALEDRSITDKPQWDAAIQFMEETLQARLKDTDSVINDMVGPDWKQRWMSWKNRSPEQHTRNETRNELERLLKLHEDHTAYLANDEVTTVRKNLEGRGVEVDPALIKDTWHQLYRRHFLQKALQHCNLCRRGFYYYQRHFVDSELECNDVVLFWRIQRMLLITANTLRQQLTNTEVRRLEKNVKEVLEDFGEDNERKVHLITGRRVQLAEDLKKVREIQEKLEAFIEALHKEK.

Residues 1-89 (MLRVGRAVAC…GGWRYQQHRS (89 aa)) constitute a mitochondrion transit peptide. Topologically, residues 90–98 (FWMLRLASR) are mitochondrial matrix. The chain crosses the membrane as a helical span at residues 99–115 (LLKLRYIVLGSAVGGGY). The Mitochondrial intermembrane segment spans residues 116–781 (TAKKTYEEWK…SVINDMVGPD (666 aa)). Positions 204–224 (EAPVTATPEASDKQFKKSSDK) are disordered. Residues 213–224 (ASDKQFKKSSDK) show a composition bias toward basic and acidic residues. Residues 219–265 (KKSSDKEKVDQLQEELLRTQMKYQRMLERLEKENKDLRKVVLQKDEK) are a coiled coil. In terms of domain architecture, Dynamin-type G spans 297–572 (QDHLPRVVVV…FWKMVRESVE (276 aa)). The G1 motif stretch occupies residues 307-314 (GDQSAGKT). GTP-binding residues include S310, G312, K313, T314, S315, and G329. Residue T314 participates in Mg(2+) binding. Positions 333–336 (MMTR) are G2 motif. 2 residues coordinate Mg(2+): T335 and D410. A G3 motif region spans residues 410 to 413 (DLPG). Positions 478-481 (TKVD) are G4 motif. Residues K479, D481, and T514 each coordinate GTP. Residues 512–515 (VVTG) form a G5 motif region. 2 stalk region regions span residues 600-847 (DRNE…IKDT) and 885-939 (CNDV…VHLI). The tract at residues 747 to 867 (TDKPQWDAAI…QKALQHCNLC (121 aa)) is paddle region. Residues 782–792 (WKQRWMSWKNR) lie within the membrane without spanning it. Over 793–971 (SPEQHTRNET…AFIEALHKEK (179 aa)) the chain is Mitochondrial intermembrane. C867 and C885 are joined by a disulfide. Residues 906–971 (RQQLTNTEVR…AFIEALHKEK (66 aa)) are a coiled coil.

Belongs to the TRAFAC class dynamin-like GTPase superfamily. Dynamin/Fzo/YdjA family. In terms of assembly, oligomeric complex consisting of membrane-bound and soluble forms of OPA1. Post-translationally, cleaved by OMA1 or YME1L downstream of the transmembrane region in response to different signals to generate soluble forms. Cleaved by OMA1 at position S1 following stress conditions, generating the short soluble form (Dynamin-like GTPase OPA1, short form; S-OPA1). Strongly expressed in the brain, ovary and skeletal muscle. In the brain, expression of the mRNA was observed specifically in motor neurons, in nucleus oculomotorius, in nucleus valvulae lateralis, in the medulla oblongata and in the spinal cord.

The protein resides in the mitochondrion inner membrane. Its subcellular location is the mitochondrion intermembrane space. The catalysed reaction is GTP + H2O = GDP + phosphate + H(+). Functionally, dynamin-related GTPase that is essential for normal mitochondrial morphology by mediating fusion of the mitochondrial inner membranes, regulating cristae morphology and maintaining respiratory chain function. Exists in two forms: the transmembrane, long form (Dynamin-like GTPase OPA1, long form; L-OPA1), which is tethered to the inner mitochondrial membrane, and the short soluble form (Dynamin-like GTPase OPA1, short form; S-OPA1), which results from proteolytic cleavage and localizes in the intermembrane space. Both forms (L-OPA1 and S-OPA1) cooperate to catalyze the fusion of the mitochondrial inner membrane. The equilibrium between L-OPA1 and S-OPA1 is essential: excess levels of S-OPA1, produced by cleavage by OMA1 following loss of mitochondrial membrane potential, lead to an impaired equilibrium between L-OPA1 and S-OPA1, inhibiting mitochondrial fusion. The balance between L-OPA1 and S-OPA1 also influences cristae shape and morphology. Its role in mitochondrial morphology is required for mitochondrial genome maintenance. In terms of biological role, constitutes the transmembrane long form (L-OPA1) that plays a central role in mitochondrial inner membrane fusion and cristae morphology. L-OPA1 and the soluble short form (S-OPA1) form higher-order helical assemblies that coordinate the fusion of mitochondrial inner membranes. Inner membrane-anchored L-OPA1 molecules initiate membrane remodeling by recruiting soluble S-OPA1 to rapidly polymerize into a flexible cylindrical scaffold encaging the mitochondrial inner membrane. Once at the membrane surface, the formation of S-OPA1 helices induce bilayer curvature. OPA1 dimerization through the paddle region, which inserts into cardiolipin-containing membrane, promotes GTP hydrolysis and the helical assembly of a flexible OPA1 lattice on the membrane, which drives membrane curvature and mitochondrial fusion. Plays a role in the maintenance and remodeling of mitochondrial cristae, some invaginations of the mitochondrial inner membrane that provide an increase in the surface area. Probably acts by forming helical filaments at the inside of inner membrane tubes with the shape and dimensions of crista junctions. Constitutes the soluble short form (S-OPA1) generated by cleavage by OMA1, which plays a central role in mitochondrial inner membrane fusion and cristae morphology. The transmembrane long form (L-OPA1) and the S-OPA1 form higher-order helical assemblies that coordinate the fusion of mitochondrial inner membranes. Inner membrane-anchored L-OPA1 molecules initiate membrane remodeling by recruiting soluble S-OPA1 to rapidly polymerize into a flexible cylindrical scaffold encaging the mitochondrial inner membrane. Once at the membrane surface, the formation of S-OPA1 helices induce bilayer curvature. OPA1 dimerization through the paddle region, which inserts into cardiolipin-containing membrane, promotes GTP hydrolysis and the helical assembly of a flexible OPA1 lattice on the membrane, which drives membrane curvature and mitochondrial fusion. Excess levels of S-OPA1 produced by cleavage by OMA1 following stress conditions that induce loss of mitochondrial membrane potential, lead to an impaired equilibrium between L-OPA1 and S-OPA1, thereby inhibiting mitochondrial fusion. Plays a role in the maintenance and remodeling of mitochondrial cristae, some invaginations of the mitochondrial inner membrane that provide an increase in the surface area. Probably acts by forming helical filaments at the inside of inner membrane tubes with the shape and dimensions of crista junctions. This is Dynamin-like GTPase OPA1, mitochondrial (opa1) from Oncorhynchus masou (Cherry salmon).